The chain runs to 460 residues: Anthocyanidin 3-O-glucoside 5-O-glucosyltransferase 1 (460 aa).

A signal peptide spans methionine 1–glutamine 22. Histidine 16 serves as the catalytic Proton acceptor. An an anthocyanidin-binding site is contributed by histidine 16. Residues glutamine 338, histidine 353, tryptophan 356, asparagine 357, serine 358, glutamate 361, aspartate 377, and glutamine 378 each coordinate UDP-alpha-D-glucose.

This sequence belongs to the UDP-glycosyltransferase family.

The catalysed reaction is an anthocyanidin 3-O-beta-D-glucoside + UDP-alpha-D-glucose = an anthocyanidin 3,5-di-O-beta-D-glucoside + UDP + 2 H(+). It participates in pigment biosynthesis; anthocyanin biosynthesis. Catalyzes the glucosylation at the O-5 position of anthocyanidin 3-glucosides to form anthocyanidin 3,5-di-O-glucosides using UDP-glucose as sugar donor. Anthocyanidin 3,5-di-O-glucosides are molecules that are responsible for pigmentation. Also acts on anthocyanidin 3-O-(6-O-malonylglucoside). Much less active with hydroxycinnamoylglucose derivatives. No activity in the absence of the 3-O-glucoside group. The chain is Anthocyanidin 3-O-glucoside 5-O-glucosyltransferase 1 (PF3R4) from Perilla frutescens (Beefsteak mint).